A 322-amino-acid chain; its full sequence is MLQGHERSITQIKYNREGDLLFSCSKDQKPNVWYSLNGERLGTYDGHQGAVWCLDVDWESRKLITGAGDMTTKIWDVEYGTIIASIPSKSSVRTSNFSFSGNQAAYSTDKAMGQSCELFIIDVRNADSSLAEQTPTLRIPMTESKITSMLWGPLDETIITGHDNGNIAIWDIRKGQKVVDSGSDHTAGINDMQLSKDGTMFVTASKDTTAKLFDSESLMCLKTYKTERPVNSAAISPILDHVVLGGGQDAMEVTTTSTKAGKFDSRFFHLIYEEEFARLKGHFGPINSLAFHPDGKSYASGGEDGFVRVQTFDSTYFENIFE.

WD repeat units follow at residues 4–43 (GHER…RLGT), 46–85 (GHQG…IIAS), 141–180 (MTES…KVVD), 184–223 (DHTA…CLKT), and 281–322 (GHFG…NIFE).

The protein belongs to the eIF-3 subunit I family. Component of the eukaryotic translation initiation factor 3 (eIF-3) complex. The eIF-3 complex interacts with pix.

It localises to the cytoplasm. Functionally, component of the eukaryotic translation initiation factor 3 (eIF-3) complex, which is involved in protein synthesis of a specialized repertoire of mRNAs and, together with other initiation factors, stimulates binding of mRNA and methionyl-tRNAi to the 40S ribosome. The eIF-3 complex specifically targets and initiates translation of a subset of mRNAs involved in cell proliferation. The chain is Eukaryotic translation initiation factor 3 subunit I from Drosophila ananassae (Fruit fly).